The sequence spans 665 residues: Potassium-transporting ATPase ATP-binding subunit (665 aa).

Transmembrane regions (helical) follow at residues 28 to 48, 56 to 76, 207 to 227, and 244 to 264; these read MFLTEMSLFLSVFIYAFPGFF, YLQFYLAVVILLFLTVFFSSM, IALTVFLSGLTLIFLIITASI, and IVLLIALIPTTIGALLPAIGI. Asp295 functions as the 4-aspartylphosphate intermediate in the catalytic mechanism. Residues Asp332, Glu336, 364–371, and Lys382 contribute to the ATP site; that span reads FSSETKYS. Residues Asp501 and Asp505 each coordinate Mg(2+). The next 3 membrane-spanning stretches (helical) occupy residues 570-590, 596-616, and 644-664; these read YFVIIPAIFYMFPSLSMVNVL, IVAVTSALIFNTIIIVFLIPL, and VVVPFIAIKLIYMLLVALGVV.

The protein belongs to the cation transport ATPase (P-type) (TC 3.A.3) family. Type IA subfamily. In terms of assembly, the system is composed of three essential subunits: KdpA, KdpB and KdpC.

The protein localises to the cell membrane. The catalysed reaction is K(+)(out) + ATP + H2O = K(+)(in) + ADP + phosphate + H(+). Functionally, part of the high-affinity ATP-driven potassium transport (or Kdp) system, which catalyzes the hydrolysis of ATP coupled with the electrogenic transport of potassium into the cytoplasm. This subunit is responsible for energy coupling to the transport system and for the release of the potassium ions to the cytoplasm. The polypeptide is Potassium-transporting ATPase ATP-binding subunit (Thermoplasma acidophilum (strain ATCC 25905 / DSM 1728 / JCM 9062 / NBRC 15155 / AMRC-C165)).